Reading from the N-terminus, the 88-residue chain is Large ribosomal subunit protein bL31B (88 aa).

The protein belongs to the bacterial ribosomal protein bL31 family. Type B subfamily. Part of the 50S ribosomal subunit.

The chain is Large ribosomal subunit protein bL31B from Herminiimonas arsenicoxydans.